Consider the following 121-residue polypeptide: UPF0231 protein ESA_03214 (121 aa).

It belongs to the UPF0231 family.

This is UPF0231 protein ESA_03214 from Cronobacter sakazakii (strain ATCC BAA-894) (Enterobacter sakazakii).